We begin with the raw amino-acid sequence, 182 residues long: Large ribosomal subunit protein uL16 (182 aa).

The protein belongs to the universal ribosomal protein uL16 family.

The sequence is that of Large ribosomal subunit protein uL16 from Pyrobaculum arsenaticum (strain DSM 13514 / JCM 11321 / PZ6).